A 695-amino-acid polypeptide reads, in one-letter code: NADPH--cytochrome P450 reductase (695 aa).

The Lumenal segment spans residues 1 to 8 (MAQLDTLD). The chain crosses the membrane as a helical span at residues 9 to 31 (VVVLAVLLAGSIAYFTKGTFWAV). Residues 32-695 (AKDPYASSGP…SGSYQEDVWS (664 aa)) lie on the Cytoplasmic side of the membrane. Positions 66–221 (CVIFYGSQTG…DFLAWKEPMW (156 aa)) constitute a Flavodoxin-like domain. Residues 72-77 (SQTGTA), 123-126 (ATYG), 169-178 (LGNNTYEHYN), and D204 contribute to the FMN site. The 262-residue stretch at 277–538 (HNPYIAPIVE…HVRHSNFKLP (262 aa)) folds into the FAD-binding FR-type domain. R296 contributes to the NADP(+) binding site. Residues 451–454 (RYYS), 469–471 (TAV), and 486–489 (GVTT) contribute to the FAD site. The interval 497-516 (QKQNGDPSPDPHGQTYAING) is disordered. Residues T552, 614–615 (SR), 620–624 (KVYVQ), and E656 contribute to the NADP(+) site. Residue W694 coordinates FAD.

Belongs to the NADPH--cytochrome P450 reductase family. This sequence in the N-terminal section; belongs to the flavodoxin family. The protein in the C-terminal section; belongs to the flavoprotein pyridine nucleotide cytochrome reductase family. The cofactor is FAD. Requires FMN as cofactor.

It is found in the endoplasmic reticulum membrane. The protein resides in the mitochondrion outer membrane. It localises to the cell membrane. The catalysed reaction is 2 oxidized [cytochrome P450] + NADPH = 2 reduced [cytochrome P450] + NADP(+) + H(+). This enzyme is required for electron transfer from NADP to cytochrome P450 in microsomes. It can also provide electron transfer to heme oxygenase and cytochrome B5. Involved in ergosterol biosynthesis. The chain is NADPH--cytochrome P450 reductase from Emericella nidulans (strain FGSC A4 / ATCC 38163 / CBS 112.46 / NRRL 194 / M139) (Aspergillus nidulans).